We begin with the raw amino-acid sequence, 475 residues long: Putative histidine permease (475 aa).

The next 12 membrane-spanning stretches (helical) occupy residues 20-40, 44-64, 87-107, 127-147, 162-182, 199-219, 246-266, 277-297, 341-361, 363-383, 410-430, and 434-454; these read LFMI…TGYT, AGPG…YLVM, FIGP…WVVT, SVWM…AFSV, IVTI…LISL, GLFP…SFAF, VAWR…GLIS, FVAV…NFVI, ALMI…VAPG, VYVV…MSIA, YPLM…GLAF, and QRIA…IYHF.

Belongs to the amino acid-polyamine-organocation (APC) superfamily.

The protein resides in the cell membrane. The sequence is that of Putative histidine permease (hutM) from Bacillus subtilis (strain 168).